Consider the following 445-residue polypeptide: Tubulin beta-1 chain (445 aa).

GTP contacts are provided by Gln-11, Glu-69, Ser-138, Gly-142, Thr-143, Gly-144, Asn-204, and Asn-226. Glu-69 lines the Mg(2+) pocket. Positions 422–445 (QYQDAGMDDEYGEEYEDEAPAEEE) are disordered. The span at 427 to 445 (GMDDEYGEEYEDEAPAEEE) shows a compositional bias: acidic residues.

It belongs to the tubulin family. As to quaternary structure, dimer of alpha and beta chains. A typical microtubule is a hollow water-filled tube with an outer diameter of 25 nm and an inner diameter of 15 nM. Alpha-beta heterodimers associate head-to-tail to form protofilaments running lengthwise along the microtubule wall with the beta-tubulin subunit facing the microtubule plus end conferring a structural polarity. Microtubules usually have 13 protofilaments but different protofilament numbers can be found in some organisms and specialized cells. Mg(2+) is required as a cofactor.

It is found in the cytoplasm. The protein resides in the cytoskeleton. Tubulin is the major constituent of microtubules, a cylinder consisting of laterally associated linear protofilaments composed of alpha- and beta-tubulin heterodimers. Microtubules grow by the addition of GTP-tubulin dimers to the microtubule end, where a stabilizing cap forms. Below the cap, tubulin dimers are in GDP-bound state, owing to GTPase activity of alpha-tubulin. The protein is Tubulin beta-1 chain (TUB1) of Colletotrichum graminicola (Maize anthracnose fungus).